The primary structure comprises 626 residues: MDIRTVLKDNFLQYSSYVIKDRAIASVVDGFKPVQRRIIHSLFEMHDGNFHKVANVVGNTMKYHPHGDTSIYEALVNIANKDLFIEKQGNFGNLFTGDPASASRYIECRLTPLAFDVLYSKEITIYESSYDGRNNEPLLYPAKIPVILIQGSEGIAVGMAAKILPHNFNEILNAVKSELLGESYDIYPDFPTGGIVDVNEYADGNGKVLVRAKIETIDEKTIVIRELPFGETTESLISSIEKAIRKNYIKVSSINDFTAENVAIELSLPRGVYASEVIEKLYHYTNCQISISVNLLLLSERYPVVYTIKDLIKFHAAHLQKILKMELELQKSKILEKIFYKTLEQIFIEKKIYKLLETISKEENILSIILSEVLRHKESFSREVLKEDVENLLKIPIRKISLFDIDKNSKDIKILNKELKSINSNISSIRGYSINFIDLLLAKYSKEHQRKTKISLIKSKNVKEIATKNMKVYLNLAEGFAGTSLFDGEFIGNASYYDKILVFRENSYVLKNIEDKTFIDKKNVCALVYDINNSKEQIFSIIYFNRLDNFYYVKRFKIDKFITDKVYEFLGENDEFVDFSLNPEFVEFSTNKDIVKRIEIDNFMVKSRSSIGKRISSNNLKKVKFK.

In terms of domain architecture, Topo IIA-type catalytic spans 24 to 439 (IASVVDGFKP…RGYSINFIDL (416 aa)). Y105 (O-(5'-phospho-DNA)-tyrosine intermediate) is an active-site residue.

The protein belongs to the type II topoisomerase GyrA/ParC subunit family. In terms of assembly, heterotetramer composed of ParC and ParE.

It is found in the cell membrane. The catalysed reaction is ATP-dependent breakage, passage and rejoining of double-stranded DNA.. Functionally, topoisomerase IV is essential for chromosome segregation. It relaxes supercoiled DNA. Performs the decatenation events required during the replication of a circular DNA molecule. The polypeptide is DNA topoisomerase 4 subunit A (parC) (Borreliella burgdorferi (strain ATCC 35210 / DSM 4680 / CIP 102532 / B31) (Borrelia burgdorferi)).